Reading from the N-terminus, the 203-residue chain is Urease accessory protein UreG (203 aa).

14-21 (GPVGSGKT) contacts GTP.

The protein belongs to the SIMIBI class G3E GTPase family. UreG subfamily. As to quaternary structure, homodimer. UreD, UreF and UreG form a complex that acts as a GTP-hydrolysis-dependent molecular chaperone, activating the urease apoprotein by helping to assemble the nickel containing metallocenter of UreC. The UreE protein probably delivers the nickel.

Its subcellular location is the cytoplasm. Functionally, facilitates the functional incorporation of the urease nickel metallocenter. This process requires GTP hydrolysis, probably effectuated by UreG. The chain is Urease accessory protein UreG from Rhizobium johnstonii (strain DSM 114642 / LMG 32736 / 3841) (Rhizobium leguminosarum bv. viciae).